Consider the following 879-residue polypeptide: Leucine--tRNA ligase (879 aa).

Residues 45–55 (PYPSGALHMGH) carry the 'HIGH' region motif. The 'KMSKS' region signature appears at 637 to 641 (KMSKS). Lys640 is a binding site for ATP.

The protein belongs to the class-I aminoacyl-tRNA synthetase family.

Its subcellular location is the cytoplasm. The enzyme catalyses tRNA(Leu) + L-leucine + ATP = L-leucyl-tRNA(Leu) + AMP + diphosphate. The protein is Leucine--tRNA ligase of Xylella fastidiosa (strain 9a5c).